The chain runs to 137 residues: Ribosomal RNA small subunit methyltransferase G (137 aa).

S-adenosyl-L-methionine contacts are provided by residues Gly75, Phe80, and 126 to 127; that span reads AE.

Belongs to the methyltransferase superfamily. RNA methyltransferase RsmG family.

The protein resides in the cytoplasm. In terms of biological role, specifically methylates the N7 position of a guanine in 16S rRNA. In Mycoplasma mycoides subsp. mycoides SC (strain CCUG 32753 / NCTC 10114 / PG1), this protein is Ribosomal RNA small subunit methyltransferase G.